Here is a 326-residue protein sequence, read N- to C-terminus: Dipeptide transport ATP-binding protein DppD (326 aa).

The ABC transporter domain occupies 5 to 255 (IRVEDLRAVY…PLHPYTRGLI (251 aa)). ATP contacts are provided by residues 44–49 (ASGKST), Asn-61, and Gln-97. [4Fe-4S] cluster-binding residues include Cys-285, Cys-291, Cys-298, and Cys-316.

The protein belongs to the ABC transporter superfamily.

Its subcellular location is the cell membrane. It catalyses the reaction a dipeptide(out) + ATP + H2O = a dipeptide(in) + ADP + phosphate + H(+). Its activity is regulated as follows. The C-terminal iron-sulfur cluster may stabilize the structure of the C-terminal loops and may function in the regulation of the transport process. Its function is as follows. Part of the ABC transporter Dpp involved in dipeptide transport. Responsible for energy coupling to the transport system. The polypeptide is Dipeptide transport ATP-binding protein DppD (Caldanaerobacter subterraneus subsp. tengcongensis (strain DSM 15242 / JCM 11007 / NBRC 100824 / MB4) (Thermoanaerobacter tengcongensis)).